The primary structure comprises 122 residues: Small ribosomal subunit protein uS13 (122 aa).

Basic residues predominate over residues 95-116 (GLPVRGQKTKTNARTRKGRRKT). The disordered stretch occupies residues 95–122 (GLPVRGQKTKTNARTRKGRRKTVGAATK).

The protein belongs to the universal ribosomal protein uS13 family. Part of the 30S ribosomal subunit. Forms a loose heterodimer with protein S19. Forms two bridges to the 50S subunit in the 70S ribosome.

Functionally, located at the top of the head of the 30S subunit, it contacts several helices of the 16S rRNA. In the 70S ribosome it contacts the 23S rRNA (bridge B1a) and protein L5 of the 50S subunit (bridge B1b), connecting the 2 subunits; these bridges are implicated in subunit movement. Contacts the tRNAs in the A and P-sites. The polypeptide is Small ribosomal subunit protein uS13 (Campylobacter curvus (strain 525.92)).